Reading from the N-terminus, the 255-residue chain is Ribosomal RNA small subunit methyltransferase J (255 aa).

Residues 107-108 (RD), 123-124 (ER), and Asp178 contribute to the S-adenosyl-L-methionine site. Positions 228–247 (ARAEPLSGRKPSHQIPGKTT) are disordered.

The protein belongs to the methyltransferase superfamily. RsmJ family.

The protein localises to the cytoplasm. It carries out the reaction guanosine(1516) in 16S rRNA + S-adenosyl-L-methionine = N(2)-methylguanosine(1516) in 16S rRNA + S-adenosyl-L-homocysteine + H(+). Specifically methylates the guanosine in position 1516 of 16S rRNA. This chain is Ribosomal RNA small subunit methyltransferase J, found in Thioalkalivibrio sulfidiphilus (strain HL-EbGR7).